Here is a 115-residue protein sequence, read N- to C-terminus: MSNTILKCTTRHVRIFTAVVENNDLIFDNGHLTLDIDPDNEFSWSDQSIKKVQDYFRELVDFQADNELSDYSLRKIGSLLEDFIRKLLKDGELSYNPNSRVMNYSMGLPRTQELL.

The protein belongs to the complex I NdhM subunit family. NDH-1 can be composed of about 15 different subunits; different subcomplexes with different compositions have been identified which probably have different functions.

Its subcellular location is the cellular thylakoid membrane. The catalysed reaction is a plastoquinone + NADH + (n+1) H(+)(in) = a plastoquinol + NAD(+) + n H(+)(out). The enzyme catalyses a plastoquinone + NADPH + (n+1) H(+)(in) = a plastoquinol + NADP(+) + n H(+)(out). Its function is as follows. NDH-1 shuttles electrons from an unknown electron donor, via FMN and iron-sulfur (Fe-S) centers, to quinones in the respiratory and/or the photosynthetic chain. The immediate electron acceptor for the enzyme in this species is believed to be plastoquinone. Couples the redox reaction to proton translocation, and thus conserves the redox energy in a proton gradient. Cyanobacterial NDH-1 also plays a role in inorganic carbon-concentration. In Prochlorococcus marinus (strain NATL2A), this protein is NAD(P)H-quinone oxidoreductase subunit M.